Consider the following 418-residue polypeptide: Glutamyl-tRNA(Gln) amidotransferase subunit D (418 aa).

The Asparaginase/glutaminase domain maps to 74–405 (KNISILSTGG…EDAKELMSKD (332 aa)). Catalysis depends on residues T84, T160, D161, and K237.

Belongs to the asparaginase 1 family. GatD subfamily. As to quaternary structure, heterodimer of GatD and GatE.

The catalysed reaction is L-glutamyl-tRNA(Gln) + L-glutamine + ATP + H2O = L-glutaminyl-tRNA(Gln) + L-glutamate + ADP + phosphate + H(+). Allows the formation of correctly charged Gln-tRNA(Gln) through the transamidation of misacylated Glu-tRNA(Gln) in organisms which lack glutaminyl-tRNA synthetase. The reaction takes place in the presence of glutamine and ATP through an activated gamma-phospho-Glu-tRNA(Gln). The GatDE system is specific for glutamate and does not act on aspartate. The sequence is that of Glutamyl-tRNA(Gln) amidotransferase subunit D from Methanococcus maripaludis (strain C7 / ATCC BAA-1331).